A 99-amino-acid polypeptide reads, in one-letter code: Putative UPF0320 protein YDR543C (99 aa).

Residues 80–99 (EKSPPKSPKHKNILSFNNNT) are disordered.

It belongs to the UPF0320 family.

The chain is Putative UPF0320 protein YDR543C from Saccharomyces cerevisiae (strain ATCC 204508 / S288c) (Baker's yeast).